An 861-amino-acid polypeptide reads, in one-letter code: Valine--tRNA ligase (861 aa).

The 'HIGH' region signature appears at 42–52; that stretch reads PNITGRIHMGH. The 'KMSKS' region motif lies at 521–525; sequence KMSKS. K524 contacts ATP. A coiled-coil region spans residues 792–861; the sequence is VAGLNLQSEI…ILNQILGDLM (70 aa).

It belongs to the class-I aminoacyl-tRNA synthetase family. ValS type 1 subfamily. In terms of assembly, monomer.

Its subcellular location is the cytoplasm. The enzyme catalyses tRNA(Val) + L-valine + ATP = L-valyl-tRNA(Val) + AMP + diphosphate. Its function is as follows. Catalyzes the attachment of valine to tRNA(Val). As ValRS can inadvertently accommodate and process structurally similar amino acids such as threonine, to avoid such errors, it has a 'posttransfer' editing activity that hydrolyzes mischarged Thr-tRNA(Val) in a tRNA-dependent manner. This chain is Valine--tRNA ligase, found in Pseudothermotoga lettingae (strain ATCC BAA-301 / DSM 14385 / NBRC 107922 / TMO) (Thermotoga lettingae).